The chain runs to 680 residues: DNA-directed RNA polymerase subunit beta' (680 aa).

Residues Cys69, Cys71, Cys87, and Cys90 each coordinate Zn(2+). Asp489, Asp491, and Asp493 together coordinate Mg(2+).

It belongs to the RNA polymerase beta' chain family. RpoC1 subfamily. In terms of assembly, in plastids the minimal PEP RNA polymerase catalytic core is composed of four subunits: alpha, beta, beta', and beta''. When a (nuclear-encoded) sigma factor is associated with the core the holoenzyme is formed, which can initiate transcription. Requires Mg(2+) as cofactor. The cofactor is Zn(2+).

Its subcellular location is the plastid. The protein localises to the chloroplast. It carries out the reaction RNA(n) + a ribonucleoside 5'-triphosphate = RNA(n+1) + diphosphate. Functionally, DNA-dependent RNA polymerase catalyzes the transcription of DNA into RNA using the four ribonucleoside triphosphates as substrates. This Arabidopsis thaliana (Mouse-ear cress) protein is DNA-directed RNA polymerase subunit beta'.